A 1113-amino-acid chain; its full sequence is Potassium channel subfamily U member 1 (1113 aa).

Residues 1–24 are Extracellular-facing; sequence MSQTLLDNLNKKELTETSCTIEIQ. A helical transmembrane segment spans residues 25–45; the sequence is AAFILSSLATFFGGLIVLFIF. Topologically, residues 46-101 are cytoplasmic; that stretch reads RIALKISRNWKTVKGPRGILELFSSRRIEVNPLRKLYFHGVFRERIEMLLSAQTIV. Residues 102 to 122 form a helical membrane-spanning segment; sequence GQVLVILVFVLSIGSLVIYFI. Topologically, residues 123-137 are extracellular; the sequence is NSMDPVRKCSSYEDK. A helical transmembrane segment spans residues 138–158; sequence IVHVDLSFNAFFSFYFGLRFW. Topologically, residues 159 to 165 are cytoplasmic; that stretch reads AAEDKIK. Residues 166–186 form a helical membrane-spanning segment; that stretch reads FWLEMNSIVDIFTIPPTFISY. Residues 187–188 are Extracellular-facing; sequence YL. Residues 189 to 209 form a helical; Voltage-sensor membrane-spanning segment; the sequence is KSNWLGLRFLRALRLLELPKI. Residues 210–226 are Cytoplasmic-facing; that stretch reads LQILQVIKTSNSVKLSK. A helical membrane pass occupies residues 227-247; sequence LMSIVISTWFTAAGFLHLVEN. The Extracellular portion of the chain corresponds to 248–259; the sequence is SGDPWLNGRNSQ. The pore-forming intramembrane region spans 260-282; it reads TMSYFESIYLVTATMSTVGFGDV. Residues 283 to 290 are Extracellular-facing; sequence VAKTSLGR. The chain crosses the membrane as a helical span at residues 291 to 311; sequence IFIVFFTLGSLILFANYIPEM. Topologically, residues 312–1113 are cytoplasmic; it reads VELFSTRKKY…FDASDIDPGK (802 aa). 2 RCK N-terminal domains span residues 331-473 and 710-881; these read KKFI…DNII and QNHI…DEAI. Residues 1047 to 1081 are compositionally biased toward polar residues; sequence ASIQDQDTTTNVTSMSQGSNFQGAQSALNEHSLSP. The interval 1047–1091 is disordered; the sequence is ASIQDQDTTTNVTSMSQGSNFQGAQSALNEHSLSPASAMGEKKSP.

The protein belongs to the potassium channel family. Calcium-activated (TC 1.A.1.3) subfamily. KCa1.1/KCNMA1 sub-subfamily. As to quaternary structure, homotetramer; which constitutes the activated potassium channel. Interacts with LRRC52; this interaction changes channel gating properties, such as shifting gating to more negative potentials at a given pH.

The protein resides in the cell membrane. Its subcellular location is the cell projection. The protein localises to the cilium. It localises to the flagellum membrane. The catalysed reaction is K(+)(in) = K(+)(out). Regulated by changes in cytosolic pH; activated by alkalization. Not activated by intracellular Ca(2+). VU0546110 acts as a selective inhibitor. The auxiliary subunit LRRC52 shifts the activation of KCNU1 to more negative potentials at a given pH. Functionally, testis-specific potassium channel activated by both intracellular pH and membrane voltage that mediates export of K(+). Represents the primary spermatozoan K(+) current. The channel underlies a pH-triggered membrane hyperpolarization during the process of sperm capacitation, as sperm encounter the alkaline environment near the ovum in the female reproductive tract, thereby playing an essential for male fertility. This is Potassium channel subfamily U member 1 (Kcnu1) from Rattus norvegicus (Rat).